The sequence spans 470 residues: Cytochrome P450 monooxygenase sirC (470 aa).

Residues 12-34 form a helical membrane-spanning segment; it reads LRGMVVGTIMLLCYRYGLALSIL. Asn399 carries an N-linked (GlcNAc...) asparagine glycan. Residue Cys410 participates in heme binding.

It belongs to the cytochrome P450 family. The cofactor is heme.

It localises to the membrane. The protein operates within mycotoxin biosynthesis. Its function is as follows. Cytochrome P450 monooxygenase; part of the gene cluster that mediates the biosynthesis of sirodesmin PL, an epipolythiodioxopiperazine (ETP) characterized by a disulfide bridged cyclic dipeptide and that acts as a phytotoxin which is involved in the blackleg didease of canola. SirD catalyzes the O-prenylation of L-tyrosine (L-Tyr) in the presence of dimethylallyl diphosphate (DMAPP) to yield 4-O-dimethylallyl-L-Tyr, and therefore represents probably the first pathway-specific enzyme in the biosynthesis of sirodesmin PL. 4-O-dimethylallyl-L-Tyr, then undergoes condensation with L-Ser in a reaction catalyzed by the non-ribosomal peptide synthase sirP to form the diketopiperazine (DKP) backbone. Further bishydroxylation of the DKP performed by the cytochrome P450 monooxygenase sirC leads to the production of the intermediate phomamide. This step is essential to form the reactive thiol group required for toxicity of sirodesmin PL. The next steps of sirodesmin biosynthesis are not well understood yet, but some predictions could be made from intermediate compounds identification. Phomamide is converted into phomalizarine via oxidation, probably by sirT. Further oxidation, methylation (by sirM or sirN) and reduction steps convert phomalizarine to deacetyl sirodesmin. Finally, acetyltransferase sirH probably acetylates deacetyl sirodesmin to produce sirodesmin PL. The polypeptide is Cytochrome P450 monooxygenase sirC (Leptosphaeria maculans (Blackleg fungus)).